The following is a 93-amino-acid chain: Small ribosomal subunit protein uS19 (93 aa).

It belongs to the universal ribosomal protein uS19 family.

In terms of biological role, protein S19 forms a complex with S13 that binds strongly to the 16S ribosomal RNA. The chain is Small ribosomal subunit protein uS19 from Geobacter sulfurreducens (strain ATCC 51573 / DSM 12127 / PCA).